A 361-amino-acid chain; its full sequence is MLYNLLLPYIHNSHIANLFHYITFRSGLAVLVTLSLSFLIGPRLIKFLQTLQKYGQPIRLDGPESHQAKAGTPTMGGIMIILSSCFSTLLLADLTNKYIWITLFGFVSFSIIGFLDDYAKVTKNNHYGVKGKSKLLLQGIISLIVCILLEYTIDSPSHMLNVPFFKSLSMDLGYLYIFFAIFVIVGASNAVNLTDGLDGLATVPIALTAGSFALISYLVGNLIYSNYLQLTYLPNTGELTIFCASIVGSCLGFLWFNAQPAEVFMGDTGSLSLGGVLGIISVITKHEIVLGIVGGLFVIETISVIMQVYYFKATKGKRIFKMAPLHHHFEKSGWTESKVVIRFWIISLIFVLIGLSSLKLR.

A run of 10 helical transmembrane segments spans residues 28 to 48, 74 to 94, 99 to 119, 135 to 155, 167 to 187, 203 to 223, 236 to 256, 263 to 283, 288 to 308, and 338 to 358; these read LAVLVTLSLSFLIGPRLIKFL, TMGGIMIILSSCFSTLLLADL, IWITLFGFVSFSIIGFLDDYA, LLLQGIISLIVCILLEYTIDS, SLSMDLGYLYIFFAIFVIVGA, VPIALTAGSFALISYLVGNLI, TGELTIFCASIVGSCLGFLWF, VFMGDTGSLSLGGVLGIISVI, IVLGIVGGLFVIETISVIMQV, and KVVIRFWIISLIFVLIGLSSL.

It belongs to the glycosyltransferase 4 family. MraY subfamily. It depends on Mg(2+) as a cofactor.

The protein resides in the cell inner membrane. The enzyme catalyses UDP-N-acetyl-alpha-D-muramoyl-L-alanyl-gamma-D-glutamyl-meso-2,6-diaminopimeloyl-D-alanyl-D-alanine + di-trans,octa-cis-undecaprenyl phosphate = di-trans,octa-cis-undecaprenyl diphospho-N-acetyl-alpha-D-muramoyl-L-alanyl-D-glutamyl-meso-2,6-diaminopimeloyl-D-alanyl-D-alanine + UMP. It functions in the pathway cell wall biogenesis; peptidoglycan biosynthesis. Catalyzes the initial step of the lipid cycle reactions in the biosynthesis of the cell wall peptidoglycan: transfers peptidoglycan precursor phospho-MurNAc-pentapeptide from UDP-MurNAc-pentapeptide onto the lipid carrier undecaprenyl phosphate, yielding undecaprenyl-pyrophosphoryl-MurNAc-pentapeptide, known as lipid I. In Rickettsia bellii (strain OSU 85-389), this protein is Phospho-N-acetylmuramoyl-pentapeptide-transferase.